Reading from the N-terminus, the 374-residue chain is WW domain-binding protein 4 (374 aa).

The Matrin-type zinc-finger motif lies at 11–42 (KFCDYCKCWIADNRPSVEFHERGKNHKENVAR). Residues 91-109 (EPTISPVTNTVQPTPTANQ) are compositionally biased toward polar residues. Disordered stretches follow at residues 91-126 (EPTI…SKGR) and 188-328 (SKWE…EAGA). The span at 112-121 (EKKKKKKKKE) shows a compositional bias: basic residues. WW domains follow at residues 121–154 (EASK…KPEG) and 162–195 (TAAK…KPDD). 2 stretches are compositionally biased toward basic and acidic residues: residues 188 to 197 (SKWEKPDDFI) and 205 to 270 (SSKD…EKTT). A phosphoserine mark is found at serine 219, serine 226, and serine 228. Residues 315-325 (STENECLSSSE) are compositionally biased toward polar residues. The segment at 355-373 (KKRRIENGKSRNLRQRGED) is interaction with SNRNP200.

As to quaternary structure, component of the spliceosome B complex. Associated with U2 snRNPs. Binds splicing factors SNRPB, SNRPC and SF1. Interacts via the WW domains with the Pro-rich domains of KHDRBS1/SAM68. Interacts via the WW domains with the Pro-rich domains of WBP11. Interacts with SNRNP200.

It is found in the nucleus. The protein resides in the nucleus speckle. Its function is as follows. Involved in pre-mRNA splicing as a component of the spliceosome. May play a role in cross-intron bridging of U1 and U2 snRNPs in the mammalian A complex. This is WW domain-binding protein 4 (Wbp4) from Rattus norvegicus (Rat).